Here is a 181-residue protein sequence, read N- to C-terminus: Bifunctional protein PyrR (181 aa).

Positions 101–113 match the PRPP-binding motif; it reads VIVVDDVLYTGRT.

It belongs to the purine/pyrimidine phosphoribosyltransferase family. PyrR subfamily. Homodimer and homohexamer; in equilibrium.

The catalysed reaction is UMP + diphosphate = 5-phospho-alpha-D-ribose 1-diphosphate + uracil. Its function is as follows. Regulates transcriptional attenuation of the pyrimidine nucleotide (pyr) operon by binding in a uridine-dependent manner to specific sites on pyr mRNA. This disrupts an antiterminator hairpin in the RNA and favors formation of a downstream transcription terminator, leading to a reduced expression of downstream genes. Also displays a weak uracil phosphoribosyltransferase activity which is not physiologically significant. This Bacillus velezensis (strain DSM 23117 / BGSC 10A6 / LMG 26770 / FZB42) (Bacillus amyloliquefaciens subsp. plantarum) protein is Bifunctional protein PyrR.